The following is a 60-amino-acid chain: Potassium channel toxin alpha-KTx 3.16 (60 aa).

The first 23 residues, 1-23, serve as a signal peptide directing secretion; the sequence is MKVFSAVLIILFVCSMIIGISEG. Intrachain disulfides connect C30/C50, C36/C55, and C40/C57.

Belongs to the short scorpion toxin superfamily. Potassium channel inhibitor family. Alpha-KTx 03 subfamily. Expressed by the venom gland.

The protein localises to the secreted. In terms of biological role, potassium channel inhibitor. In Mesobuthus gibbosus (Mediterranean checkered scorpion), this protein is Potassium channel toxin alpha-KTx 3.16.